We begin with the raw amino-acid sequence, 294 residues long: Phenylalanine-4-hydroxylase (294 aa).

Residues 1-20 (MSGDGLSNGPPPGARPDWTI) are disordered. 3 residues coordinate Fe cation: His129, His134, and Glu175.

The protein belongs to the biopterin-dependent aromatic amino acid hydroxylase family. Requires Fe(2+) as cofactor.

The catalysed reaction is (6R)-L-erythro-5,6,7,8-tetrahydrobiopterin + L-phenylalanine + O2 = (4aS,6R)-4a-hydroxy-L-erythro-5,6,7,8-tetrahydrobiopterin + L-tyrosine. The protein operates within amino-acid degradation; L-phenylalanine degradation; acetoacetate and fumarate from L-phenylalanine: step 1/6. The polypeptide is Phenylalanine-4-hydroxylase (phhA) (Caulobacter vibrioides (strain ATCC 19089 / CIP 103742 / CB 15) (Caulobacter crescentus)).